A 103-amino-acid polypeptide reads, in one-letter code: MAKGQSLQDPFLNALRRERVPVSIYLVNGIKLQGQIESFDQFVILLKNTVSQMVYKHAISTVVPSRPVSHHSNNAGGGTGSNFHHGSNAQGSSAPAQDSDETE.

The region spanning 9–68 (DPFLNALRRERVPVSIYLVNGIKLQGQIESFDQFVILLKNTVSQMVYKHAISTVVPSRPV) is the Sm domain. The disordered stretch occupies residues 63–103 (VPSRPVSHHSNNAGGGTGSNFHHGSNAQGSSAPAQDSDETE). Positions 81–96 (SNFHHGSNAQGSSAPA) are enriched in polar residues.

Belongs to the Hfq family. Homohexamer.

In terms of biological role, RNA chaperone that binds small regulatory RNA (sRNAs) and mRNAs to facilitate mRNA translational regulation in response to envelope stress, environmental stress and changes in metabolite concentrations. Also binds with high specificity to tRNAs. The chain is RNA-binding protein Hfq from Enterobacter sp. (strain 638).